Here is a 413-residue protein sequence, read N- to C-terminus: Putative zinc finger protein B0310.2 (413 aa).

Disordered regions lie at residues 130–151 (PIFS…KRSL) and 259–290 (VESD…TGPM). Residues 270–281 (PSPSTGDITENE) are compositionally biased toward polar residues. C2H2-type zinc fingers lie at residues 306-330 (FICM…MFIH) and 336-358 (HTCP…KKTH).

The protein resides in the nucleus. The sequence is that of Putative zinc finger protein B0310.2 from Caenorhabditis elegans.